Consider the following 306-residue polypeptide: uncharacterized protein (306 aa).

The protein to M.tuberculosis Rv1486c, M.bovis Mb1522c and M.leprae ML1804.

This is an uncharacterized protein from Mycobacterium avium.